Consider the following 44-residue polypeptide: Conotoxin Fi11.11 (44 aa).

Disulfide bonds link cysteine 1–cysteine 15, cysteine 8–cysteine 20, cysteine 14–cysteine 24, and cysteine 19–cysteine 28. The residue at position 30 (asparagine 30) is an Asparagine amide. A propeptide spanning residues 35–44 (QVPLKSFGQR) is cleaved from the precursor.

The protein belongs to the conotoxin I2 superfamily. Expressed by the venom duct.

The protein resides in the secreted. In Conus figulinus (Fig cone), this protein is Conotoxin Fi11.11.